A 354-amino-acid polypeptide reads, in one-letter code: Serum paraoxonase/lactonase 3 (354 aa).

N-linked (GlcNAc...) asparagine glycosylation is present at asparagine 29. Cysteine 42 and cysteine 352 are joined by a disulfide. Ca(2+) is bound by residues glutamate 53 and aspartate 54. The active-site Proton acceptor is the histidine 114. Ca(2+) is bound at residue isoleucine 116. Serine 165 bears the Phosphoserine mark. Residues asparagine 167, aspartate 168, asparagine 223, aspartate 268, and asparagine 269 each contribute to the Ca(2+) site. N-linked (GlcNAc...) asparagine glycans are attached at residues asparagine 269 and asparagine 323.

The protein belongs to the paraoxonase family. Homodimer. Ca(2+) serves as cofactor. Post-translationally, the signal sequence is not cleaved.

It is found in the secreted. It localises to the extracellular space. The catalysed reaction is a phenyl acetate + H2O = a phenol + acetate + H(+). It catalyses the reaction An aryl dialkyl phosphate + H2O = dialkyl phosphate + an aryl alcohol.. The enzyme catalyses an N-acyl-L-homoserine lactone + H2O = an N-acyl-L-homoserine + H(+). Has low activity towards the organophosphate paraxon and aromatic carboxylic acid esters. Rapidly hydrolyzes lactones such as statin prodrugs (e.g. lovastatin). Hydrolyzes aromatic lactones and 5- or 6-member ring lactones with aliphatic substituents but not simple lactones or those with polar substituents. In Homo sapiens (Human), this protein is Serum paraoxonase/lactonase 3 (PON3).